An 821-amino-acid chain; its full sequence is MILPMSSACLGQFLRASPRGMIEQFNRAPPLRVSIRGAAGVEKSLGLGRNAGSQQGMQKNQLQDKIRKQLREVQLSPSSYDTAWVAMVPVQGSHQTPRFPQCIEWIMQNQHDDGSWGTNLPGSVVNKDILLCTLACVVALKRWNTGRDHISRGLNFIGKNFWVAMDEQTIAPVGFNITFSGLLNLATGTGLEFPVMQTDIDGIFHMRKIELERDAYGTASSRRAFMAYVSEGLDSLQDWDQVMAYQRKNRSIFNSPSATAATVIHGHNDSALCYLDSLVSKLHGPVPVMYPQNAYSQLCMVDTLEKMGISNNFSCEISDILDMIYRLWIHNEEELMLEMGTCAMAFRLLRMHGYDISSDGMAQFVEQSSFDDSIHGYLNDTKALLELYRSSQIRCLEDDLILQDIGSWSARVLQEKISSKMTHKSEMLGVEYALKFPVYATLERLEQKRNIEQFKTKEQLKIEGFKLLKSGYRGAITHDEILALAVDEFHSSQSVYQQELQDLNSWVAHTRLDELKFARLMPSITYFSAAATMFPSELSEARIAWTQNCILTTTVDDFFDGDGSKEEMENLVKLIKKWDGHGEIGFSSECVEILFYAIYNTSKQIAEKAVPLQKRNVVDHIAESWWFTVRGMLTEAEWRMDKYVPTTVEEYMSAAVDSFAVGPIITSAALFVGPELSEEVFRSEEYIHLMNLANTIGRLLNDMQTYEKEIKMGKVNSIMLHALSHSGGGRGSPEASMEEAKREMRRVLQGSRCDLLRLVTRDGGVVPPPCRKLFWFMSKVLHFVYMEKDGYFTADGMMASANAVILDPLQVTLLPSGLGTL.

Mg(2+) contacts are provided by Asp-556, Asp-560, Asn-701, Thr-705, and Glu-709. Residues 556 to 560 (DDFFD) carry the DDXXD motif motif.

This sequence belongs to the terpene synthase family. Mg(2+) is required as a cofactor.

The catalysed reaction is ent-copalyl diphosphate = ent-isokaurene + diphosphate. It participates in secondary metabolite biosynthesis; terpenoid biosynthesis. Involved in the biosynthesis of ent-kaurene diterpenoids natural products. Catalyzes the conversion of ent-copalyl diphosphate to the phytoalexin precursor ent-isokaur-15-ene. The chain is Ent-isokaur-15-ene synthase from Oryza sativa subsp. indica (Rice).